Here is a 222-residue protein sequence, read N- to C-terminus: Eukaryotic translation initiation factor 3 subunit K (222 aa).

The region spanning 46–208 (YDLEANLAVL…KIKTKNITEK (163 aa)) is the PCI domain.

This sequence belongs to the eIF-3 subunit K family. In terms of assembly, component of the eukaryotic translation initiation factor 3 (eIF-3) complex. The eIF-3 complex interacts with pix.

It is found in the cytoplasm. In terms of biological role, component of the eukaryotic translation initiation factor 3 (eIF-3) complex, which is involved in protein synthesis of a specialized repertoire of mRNAs and, together with other initiation factors, stimulates binding of mRNA and methionyl-tRNAi to the 40S ribosome. The eIF-3 complex specifically targets and initiates translation of a subset of mRNAs involved in cell proliferation. The polypeptide is Eukaryotic translation initiation factor 3 subunit K (Drosophila persimilis (Fruit fly)).